The chain runs to 491 residues: Ketol-acid reductoisomerase (NADP(+)) (491 aa).

Residues 16 to 207 (IKKCRFMKEN…GGHRAGVLES (192 aa)) enclose the KARI N-terminal Rossmann domain. Residues 44-47 (CGSQ), Lys67, Ser77, and 107-109 (DKQ) contribute to the NADP(+) site. The active site involves His131. Gly157 is a binding site for NADP(+). KARI C-terminal knotted domains are found at residues 208 to 344 (SFIA…NILS) and 345 to 484 (YSEK…MKEM). Mg(2+) contacts are provided by Asp216, Glu220, Glu389, and Glu393. Ser414 lines the substrate pocket.

The protein belongs to the ketol-acid reductoisomerase family. The cofactor is Mg(2+).

The catalysed reaction is (2R)-2,3-dihydroxy-3-methylbutanoate + NADP(+) = (2S)-2-acetolactate + NADPH + H(+). It catalyses the reaction (2R,3R)-2,3-dihydroxy-3-methylpentanoate + NADP(+) = (S)-2-ethyl-2-hydroxy-3-oxobutanoate + NADPH + H(+). It participates in amino-acid biosynthesis; L-isoleucine biosynthesis; L-isoleucine from 2-oxobutanoate: step 2/4. It functions in the pathway amino-acid biosynthesis; L-valine biosynthesis; L-valine from pyruvate: step 2/4. Its function is as follows. Involved in the biosynthesis of branched-chain amino acids (BCAA). Catalyzes an alkyl-migration followed by a ketol-acid reduction of (S)-2-acetolactate (S2AL) to yield (R)-2,3-dihydroxy-isovalerate. In the isomerase reaction, S2AL is rearranged via a Mg-dependent methyl migration to produce 3-hydroxy-3-methyl-2-ketobutyrate (HMKB). In the reductase reaction, this 2-ketoacid undergoes a metal-dependent reduction by NADPH to yield (R)-2,3-dihydroxy-isovalerate. The sequence is that of Ketol-acid reductoisomerase (NADP(+)) from Buchnera aphidicola subsp. Schizaphis graminum (strain Sg).